We begin with the raw amino-acid sequence, 66 residues long: Large ribosomal subunit protein uL30 (66 aa).

This sequence belongs to the universal ribosomal protein uL30 family. In terms of assembly, part of the 50S ribosomal subunit.

This chain is Large ribosomal subunit protein uL30, found in Chloroherpeton thalassium (strain ATCC 35110 / GB-78).